The primary structure comprises 113 residues: U11-theraphotoxin-Hhn1a (113 aa).

Residues 1–21 form the signal peptide; the sequence is MNTVRVTFLLVFVLAVSLGQA. Positions 22-74 are excised as a propeptide; that stretch reads DKDENRMEMQEKTEQGRSYLDFAENLLLQKLEELEAKLLEEDSEESRNSRQKR. Residues 61–83 form a disordered region; the sequence is EEDSEESRNSRQKRCIGEGVPCD. 3 disulfides stabilise this stretch: Cys-75–Cys-90, Cys-82–Cys-95, and Cys-89–Cys-110.

It belongs to the neurotoxin 14 (magi-1) family. 01 (HNTX-16) subfamily. As to expression, expressed by the venom gland.

The protein localises to the secreted. In terms of biological role, probable ion channel inhibitor. The polypeptide is U11-theraphotoxin-Hhn1a (Cyriopagopus hainanus (Chinese bird spider)).